The chain runs to 227 residues: Cytochrome c oxidase subunit 2 (227 aa).

The Mitochondrial intermembrane portion of the chain corresponds to methionine 1–serine 14. Residues proline 15–methionine 45 form a helical membrane-spanning segment. The Mitochondrial matrix segment spans residues leucine 46–glutamine 59. The chain crosses the membrane as a helical span at residues glutamate 60–methionine 87. Residues aspartate 88–leucine 227 lie on the Mitochondrial intermembrane side of the membrane. Histidine 161, cysteine 196, glutamate 198, cysteine 200, histidine 204, and methionine 207 together coordinate Cu cation. Glutamate 198 contacts Mg(2+).

The protein belongs to the cytochrome c oxidase subunit 2 family. As to quaternary structure, component of the cytochrome c oxidase (complex IV, CIV), a multisubunit enzyme composed of 14 subunits. The complex is composed of a catalytic core of 3 subunits MT-CO1, MT-CO2 and MT-CO3, encoded in the mitochondrial DNA, and 11 supernumerary subunits COX4I, COX5A, COX5B, COX6A, COX6B, COX6C, COX7A, COX7B, COX7C, COX8 and NDUFA4, which are encoded in the nuclear genome. The complex exists as a monomer or a dimer and forms supercomplexes (SCs) in the inner mitochondrial membrane with NADH-ubiquinone oxidoreductase (complex I, CI) and ubiquinol-cytochrome c oxidoreductase (cytochrome b-c1 complex, complex III, CIII), resulting in different assemblies (supercomplex SCI(1)III(2)IV(1) and megacomplex MCI(2)III(2)IV(2)). Found in a complex with TMEM177, COA6, COX18, COX20, SCO1 and SCO2. Interacts with TMEM177 in a COX20-dependent manner. Interacts with COX20. Interacts with COX16. The cofactor is Cu cation.

It is found in the mitochondrion inner membrane. It catalyses the reaction 4 Fe(II)-[cytochrome c] + O2 + 8 H(+)(in) = 4 Fe(III)-[cytochrome c] + 2 H2O + 4 H(+)(out). Its function is as follows. Component of the cytochrome c oxidase, the last enzyme in the mitochondrial electron transport chain which drives oxidative phosphorylation. The respiratory chain contains 3 multisubunit complexes succinate dehydrogenase (complex II, CII), ubiquinol-cytochrome c oxidoreductase (cytochrome b-c1 complex, complex III, CIII) and cytochrome c oxidase (complex IV, CIV), that cooperate to transfer electrons derived from NADH and succinate to molecular oxygen, creating an electrochemical gradient over the inner membrane that drives transmembrane transport and the ATP synthase. Cytochrome c oxidase is the component of the respiratory chain that catalyzes the reduction of oxygen to water. Electrons originating from reduced cytochrome c in the intermembrane space (IMS) are transferred via the dinuclear copper A center (CU(A)) of subunit 2 and heme A of subunit 1 to the active site in subunit 1, a binuclear center (BNC) formed by heme A3 and copper B (CU(B)). The BNC reduces molecular oxygen to 2 water molecules using 4 electrons from cytochrome c in the IMS and 4 protons from the mitochondrial matrix. The protein is Cytochrome c oxidase subunit 2 (MT-CO2) of Neotamias bulleri (Buller's chipmunk).